The following is a 319-amino-acid chain: Pyrroline-5-carboxylate reductase 1, mitochondrial (319 aa).

Serine 2 carries the N-acetylserine modification. NADP(+) is bound by residues 6–11 and serine 34; that span reads IGAGQL. Residues alanine 8, glutamine 10, leucine 11, serine 34, aspartate 36, asparagine 56, valine 70, lysine 71, and alanine 97 each coordinate NADPH. Residues asparagine 56, 69 to 72, and 95 to 97 contribute to the NADP(+) site; these read AVKP and CAA. Glutamate 164 contributes to the L-proline binding site. Asparagine 230 contributes to the NADPH binding site. The L-proline site is built by alanine 237 and threonine 238. Phosphoserine occurs at positions 278 and 301. A disordered region spans residues 294–319; sequence SPAGTALSPSGHTKLLPRSLAPAGKD.

It belongs to the pyrroline-5-carboxylate reductase family. As to quaternary structure, homodecamer; composed of 5 homodimers. Interacts with LTO1.

The protein resides in the mitochondrion. It catalyses the reaction L-proline + NADP(+) = (S)-1-pyrroline-5-carboxylate + NADPH + 2 H(+). The enzyme catalyses L-proline + NAD(+) = (S)-1-pyrroline-5-carboxylate + NADH + 2 H(+). It functions in the pathway amino-acid biosynthesis; L-proline biosynthesis; L-proline from L-glutamate 5-semialdehyde: step 1/1. Subject to competitive inhibition by the reaction product proline. Subject to competitive inhibition by stearoyl coenzyme A. In terms of biological role, oxidoreductase that catalyzes the last step in proline biosynthesis, which corresponds to the reduction of pyrroline-5-carboxylate to L-proline using NAD(P)H. At physiologic concentrations, has higher specific activity in the presence of NADH. Involved in the cellular response to oxidative stress. The polypeptide is Pyrroline-5-carboxylate reductase 1, mitochondrial (Homo sapiens (Human)).